Reading from the N-terminus, the 172-residue chain is Spermidine/spermine N(1)-acetyltransferase (172 aa).

Residues 3–172 enclose the N-acetyltransferase domain; it reads VKMKKCSRED…TDLIMAKTLI (170 aa). Acetyl-CoA-binding positions include 96–98, 105–109, and 135–137; these read IYI, HGLGK, and NEN. Y142 (proton donor) is an active-site residue. K144 serves as a coordination point for acetyl-CoA.

This sequence belongs to the acetyltransferase family. As to quaternary structure, monomer.

The catalysed reaction is an alkane-alpha,omega-diamine + acetyl-CoA = an N-acetylalkane-alpha,omega-diamine + CoA + H(+). Involved in the protection against polyamine toxicity by regulating their concentration. Could also be involved in the negative control of sporulation as well as production of degradative enzymes such as alpha-amylase, levansucrase and alkaline phosphatase. Catalyzes the transfer of an acetyl group from acetyl coenzyme A (AcCoA) to an acceptor substrate and releases both CoA and the acetylated product. It possesses N1-acetyltransferase activity toward polyamine substrates including spermidine, spermine, aminopropylcadaverine, norspermidine, homospermidine, N(8)-acetylspermidine, diaminopropane and agmatine. In Bacillus subtilis (strain 168), this protein is Spermidine/spermine N(1)-acetyltransferase.